A 443-amino-acid polypeptide reads, in one-letter code: MKQLFTQHIKRLQQVVQTILETNFLSGLWIHSGTARYHFLDDQTAPFKINPHFNYLFPFPTAENCWLFLDGKNKPTVYFYAPNDYWHTPPVAPTDAFFADEFQWVILQDSQEIAKFIQNPTACTFIGEDENLAESLGFNQINPQKVLNQFHFERSIKSEFEIEAIYQAQFAALKGHQAAKQAFFEGKSEFEINLAYLKASQQSDLNVPYGNIVAINQHSAILHYTQLDYAPNPQQQSFLIDAGATIHGYASDITRTYAADPNSEFAAMIKQMEQYKYRIIDQLTVGVNYLSYHTQMQQWIAEMLYEYDFVRLTPEQIFEEGISRAFLPHGLGHLLGLQVHDAAGFQQNPRGTRKSPPEVYPSLRCTRDLAENMVLTIEPGFYFIDMLLNPLQNSPLARHINWQKIAEFKQFGGIRTEDNIVMRSQGAENLTQKAEIELQLSDH.

Mn(2+)-binding residues include D241, D252, H333, E378, and E417.

This sequence belongs to the peptidase M24B family. Bacterial-type prolidase subfamily. It depends on Mn(2+) as a cofactor.

It catalyses the reaction Xaa-L-Pro dipeptide + H2O = an L-alpha-amino acid + L-proline. Its function is as follows. Splits dipeptides with a prolyl residue in the C-terminal position. The polypeptide is Xaa-Pro dipeptidase (Actinobacillus pleuropneumoniae serotype 5b (strain L20)).